We begin with the raw amino-acid sequence, 883 residues long: Alanine--tRNA ligase (883 aa).

Residues His562, His566, Cys675, and His679 each contribute to the Zn(2+) site.

This sequence belongs to the class-II aminoacyl-tRNA synthetase family. Zn(2+) is required as a cofactor.

It is found in the cytoplasm. It carries out the reaction tRNA(Ala) + L-alanine + ATP = L-alanyl-tRNA(Ala) + AMP + diphosphate. Functionally, catalyzes the attachment of alanine to tRNA(Ala) in a two-step reaction: alanine is first activated by ATP to form Ala-AMP and then transferred to the acceptor end of tRNA(Ala). Also edits incorrectly charged Ser-tRNA(Ala) and Gly-tRNA(Ala) via its editing domain. In Ruegeria sp. (strain TM1040) (Silicibacter sp.), this protein is Alanine--tRNA ligase.